Here is a 68-residue protein sequence, read N- to C-terminus: Conotoxin Em11.5 (68 aa).

The N-terminal stretch at methionine 1 to threonine 26 is a signal peptide. Cystine bridges form between cysteine 29–cysteine 43, cysteine 36–cysteine 48, cysteine 42–cysteine 52, and cysteine 47–cysteine 56. At phenylalanine 60 the chain carries Phenylalanine amide. A propeptide spanning residues alanine 64 to glutamate 68 is cleaved from the precursor.

The protein belongs to the conotoxin I2 superfamily. As to expression, expressed by the venom duct.

The protein localises to the secreted. This Conus emaciatus (False virgin cone) protein is Conotoxin Em11.5.